We begin with the raw amino-acid sequence, 179 residues long: Peptide deformylase (179 aa).

The Fe cation site is built by C102 and H144. The active site involves E145. Position 148 (H148) interacts with Fe cation.

It belongs to the polypeptide deformylase family. It depends on Fe(2+) as a cofactor.

The enzyme catalyses N-terminal N-formyl-L-methionyl-[peptide] + H2O = N-terminal L-methionyl-[peptide] + formate. Its function is as follows. Removes the formyl group from the N-terminal Met of newly synthesized proteins. Requires at least a dipeptide for an efficient rate of reaction. N-terminal L-methionine is a prerequisite for activity but the enzyme has broad specificity at other positions. In Wolbachia pipientis wMel, this protein is Peptide deformylase.